A 124-amino-acid polypeptide reads, in one-letter code: Kalata-B1 (124 aa).

The signal sequence occupies residues 1 to 22; that stretch reads MAKFTVCLLLCLLLAAFVGAFG. Residues 23-88 constitute a propeptide that is removed on maturation; it reads SELSDSHKTT…QVFLKQLQLK (66 aa). A cross-link (cyclopeptide (Gly-Asn)) is located at residues 89–117; that stretch reads GLPVCGETCVGGTCNTPGCTCSWPVCTRN. Intrachain disulfides connect Cys93–Cys107, Cys97–Cys109, and Cys102–Cys114. The propeptide occupies 118 to 124; sequence GLPSLAA.

Belongs to the cyclotide family. Moebius subfamily. In terms of processing, kalata-B1 is a cyclic peptide which occurs in three forms: with unmodified Trp-111, with Trp-111 oxidized to form oxindolylalanine and with Trp-111 oxidized to form N-formylkynurenine. Oxidation is enhanced by exposure to sunlight. As to expression, leaves and stems. Lower in roots.

In terms of biological role, probably participates in a plant defense mechanism. Has antibiotic activity. Has a diuretic effect. Has a uterotonic effect in humans. Active against the Gram-positive S.aureus with a minimum inhibition concentration of approximately 0.2 microM. Relatively ineffective against Gram-negative bacteria such as E.coli and P.aeruginosa. Inhibitory effect on the growth and development of larvae from H.punctigera. The unmodified form has hemolytic activity, the oxidized form lacks hemolytic activity. If the protein is linearized, hemolytic activity is lost. The chain is Kalata-B1 (OAK1) from Oldenlandia affinis.